The primary structure comprises 643 residues: Uromodulin (643 aa).

The signal sequence occupies residues 1-26 (MKCLFSPNFMWMAAVVTSWVIIPAAT). Positions 32–66 (KSCSECHSNATCTVDGAATTCACQEGFTGDGLECV) constitute an EGF-like 1 domain. 21 cysteine pairs are disulfide-bonded: C34–C43, C37–C52, C54–C65, C71–C85, C79–C94, C96–C108, C114–C128, C122–C137, C139–C150, C152–C163, C157–C172, C176–C269, C197–C284, C219–C257, C225–C289, C250–C258, C299–C308, C302–C317, C319–C349, C337–C427, and C368–C391. N-linked (GlcNAc...) asparagine glycosylation occurs at N40. One can recognise an EGF-like 2; calcium-binding domain in the interval 67 to 109 (DLDECAVLGAHNCSATKSCVNTLGSYTCVCPEGFLLSSELGCE). Residue N78 is glycosylated (N-linked (GlcNAc...) asparagine). In terms of domain architecture, EGF-like 3; calcium-binding spans 110 to 151 (DVDECAEPGLSRCHALATCINGEGNYSCVCPAGYLGDGRHCE). N134 is a glycosylation site (N-linked (GlcNAc...) asparagine). Residues 152–173 (CSPGSCGPGLDCVREGDALVCV) form a beta hairpin region. The tract at residues 174-293 (DPCQVHRILD…CHLAYCTDPS (120 aa)) is D10C. An N-linked (GlcNAc...) asparagine glycan is attached at N234. N-linked (GlcNAc...) asparagine glycosylation is present at N277. Residues 294–325 (SVEGTCEECRVDEDCKSDNGEWHCQCKQDFNV) form the EGF-like 4 domain. N324 is a glycosylation site (N-linked (GlcNAc...) asparagine). A ZP-N region spans residues 336 to 431 (ECGVDDIKLS…RINFACSYPL (96 aa)). The ZP domain maps to 336–587 (ECGVDDIKLS…EKCRPTCPET (252 aa)). N-linked (GlcNAc...) asparagine glycosylation is found at N398 and N449. Residues 432 to 455 (DMKVSLKTSLQPMVSALNISMGGT) form a flexible ZP-N/ZP-C linker; important for secretion and polymerization into filaments region. An internal hydrophobic patch (IHP) region spans residues 456-466 (GTFTVRMALFQ). The interval 456–587 (GTFTVRMALF…EKCRPTCPET (132 aa)) is ZP-C. Intrachain disulfides connect C508–C568, C529–C584, and C573–C580. An N-linked (GlcNAc...) asparagine glycan is attached at N515. Positions 588–591 (RFRS) are essential for cleavage by HPN. The interval 600 to 608 (VLNLGPITR) is external hydrophobic patch (EHP); regulates polymerization into filaments. Residue S621 is the site of GPI-anchor amidated serine attachment. Residues 622–643 (SLGLLQVWLPLLLSATLTLMSP) constitute a propeptide, removed in mature form.

As to quaternary structure, homodimer that then polymerizes into long filaments. The filaments can additionally assemble laterally to form a sheet. The filaments consist of a zigzag-shaped backbone with laterally protruding arms which interact with bacterial adhesin fimH. Two fimH molecules can bind to a single UMOD monomer. Post-translationally, N-glycosylated. In terms of processing, proteolytically cleaved at a conserved C-terminal proteolytic cleavage site to generate the secreted form found in urine. This cleavage is catalyzed by HPN.

Its subcellular location is the apical cell membrane. It localises to the basolateral cell membrane. It is found in the cell projection. The protein resides in the cilium membrane. The protein localises to the secreted. In terms of biological role, functions in biogenesis and organization of the apical membrane of epithelial cells of the thick ascending limb of Henle's loop (TALH), where it promotes formation of complex filamentous gel-like structure that may play a role in the water barrier permeability. May serve as a receptor for binding and endocytosis of cytokines (IL-1, IL-2) and TNF. Facilitates neutrophil migration across renal epithelia. Its function is as follows. In the urine, may contribute to colloid osmotic pressure, retards passage of positively charged electrolytes, and inhibits formation of liquid containing supersaturated salts and subsequent formation of salt crystals. Protects against urinary tract infections by binding to type 1 fimbriated E.coli. Binds to bacterial adhesin fimH which mediates the stable formation of bacterial aggregates, prevents the binding of E.coli to uroplakins UPK1A and UPK1B which act as urothelial receptors for type I fimbriae, and allows for pathogen clearance through micturation. Also promotes aggregation of other bacteria including K.pneumoniae, P.aeruginosa and S.mitis and so may also protect against other uropathogens. The sequence is that of Uromodulin (UMOD) from Bos taurus (Bovine).